Consider the following 289-residue polypeptide: Oxaloacetate decarboxylase (289 aa).

Substrate is bound at residue Ser47. Asp85 contributes to the Mg(2+) binding site. Substrate-binding residues include Arg156 and His232.

The protein belongs to the isocitrate lyase/PEP mutase superfamily. Oxaloacetate decarboxylase family. As to quaternary structure, homotetramer; dimer of dimers. Mg(2+) serves as cofactor.

The enzyme catalyses oxaloacetate + H(+) = pyruvate + CO2. In terms of biological role, catalyzes the decarboxylation of oxaloacetate into pyruvate. Seems to play a role in maintaining cellular concentrations of bicarbonate and pyruvate. The polypeptide is Oxaloacetate decarboxylase (Rhodopseudomonas palustris (strain HaA2)).